Here is a 66-residue protein sequence, read N- to C-terminus: Large ribosomal subunit protein uL29 (66 aa).

The protein belongs to the universal ribosomal protein uL29 family.

This chain is Large ribosomal subunit protein uL29, found in Francisella tularensis subsp. holarctica (strain LVS).